The following is a 142-amino-acid chain: Hemoglobin subunit alpha (142 aa).

In terms of domain architecture, Globin spans 2–142; sequence VLSSADKNNV…VSTVLTSKYR (141 aa). Ser-4 is modified (phosphoserine). N6-succinyllysine is present on residues Lys-8 and Lys-12. Lys-17 carries the N6-acetyllysine; alternate modification. Position 17 is an N6-succinyllysine; alternate (Lys-17). Tyr-25 carries the phosphotyrosine modification. Phosphoserine is present on Ser-36. An N6-succinyllysine modification is found at Lys-41. Position 50 is a phosphoserine (Ser-50). Residue His-59 coordinates O2. His-88 is a heme b binding site. Position 103 is a phosphoserine (Ser-103). Position 109 is a phosphothreonine (Thr-109). Ser-125 is modified (phosphoserine). Phosphothreonine occurs at positions 135 and 138. A Phosphoserine modification is found at Ser-139.

This sequence belongs to the globin family. Heterotetramer of two alpha chains and two beta chains. Red blood cells.

Functionally, involved in oxygen transport from the lung to the various peripheral tissues. Its function is as follows. Hemopressin acts as an antagonist peptide of the cannabinoid receptor CNR1. Hemopressin-binding efficiently blocks cannabinoid receptor CNR1 and subsequent signaling. This chain is Hemoglobin subunit alpha (HBA), found in Panthera onca (Jaguar).